The following is a 166-amino-acid chain: Peptide methionine sulfoxide reductase MsrA (166 aa).

The active site involves cysteine 11.

The protein belongs to the MsrA Met sulfoxide reductase family.

The enzyme catalyses L-methionyl-[protein] + [thioredoxin]-disulfide + H2O = L-methionyl-(S)-S-oxide-[protein] + [thioredoxin]-dithiol. It catalyses the reaction [thioredoxin]-disulfide + L-methionine + H2O = L-methionine (S)-S-oxide + [thioredoxin]-dithiol. Has an important function as a repair enzyme for proteins that have been inactivated by oxidation. Catalyzes the reversible oxidation-reduction of methionine sulfoxide in proteins to methionine. This Mycoplasmopsis pulmonis (strain UAB CTIP) (Mycoplasma pulmonis) protein is Peptide methionine sulfoxide reductase MsrA.